A 150-amino-acid chain; its full sequence is Large ribosomal subunit protein uL22c (150 aa).

This sequence belongs to the universal ribosomal protein uL22 family. Part of the 50S ribosomal subunit.

The protein resides in the plastid. This protein binds specifically to 23S rRNA. Functionally, the globular domain of the protein is located near the polypeptide exit tunnel on the outside of the subunit, while an extended beta-hairpin is found that lines the wall of the exit tunnel in the center of the 70S ribosome. This is Large ribosomal subunit protein uL22c (rpl22) from Orobanche minor (Small broomrape).